Reading from the N-terminus, the 120-residue chain is Acyl carrier protein, mitochondrial (120 aa).

Residues 43-117 (KEITDRVIGV…ETISYLRKTP (75 aa)) enclose the Carrier domain. Ser-77 is subject to O-(pantetheine 4'-phosphoryl)serine.

Belongs to the acyl carrier protein (ACP) family. Complex I is composed of about 45 different subunits. In terms of processing, 4'-phosphopantetheine is transferred from CoA to a specific serine of apo-ACP by acpS. This modification is essential for activity because fatty acids are bound in thioester linkage to the sulfhydryl of the prosthetic group.

It is found in the mitochondrion. Its pathway is lipid metabolism; fatty acid biosynthesis. Functionally, carrier of the growing fatty acid chain in fatty acid biosynthesis. May be involved in the synthesis of very-long-chain fatty acids. Accessory and non-catalytic subunit of the mitochondrial membrane respiratory chain NADH dehydrogenase (Complex I), which functions in the transfer of electrons from NADH to the respiratory chain. In Dictyostelium discoideum (Social amoeba), this protein is Acyl carrier protein, mitochondrial (ndufab1).